A 331-amino-acid chain; its full sequence is Ketol-acid reductoisomerase (NADP(+)) (331 aa).

Residues 1–182 (MATLYYDTDA…GGTRAGILET (182 aa)) enclose the KARI N-terminal Rossmann domain. NADP(+) contacts are provided by residues 25–28 (YGSQ), S51, S53, and 83–86 (DEFQ). The active site involves H108. Residue G134 participates in NADP(+) binding. A KARI C-terminal knotted domain is found at 183–328 (NFKEETETDL…KGLRAMFSWL (146 aa)). Residues D191, E195, E227, and E231 each coordinate Mg(2+). Substrate is bound at residue S252.

The protein belongs to the ketol-acid reductoisomerase family. Mg(2+) is required as a cofactor.

The catalysed reaction is (2R)-2,3-dihydroxy-3-methylbutanoate + NADP(+) = (2S)-2-acetolactate + NADPH + H(+). It carries out the reaction (2R,3R)-2,3-dihydroxy-3-methylpentanoate + NADP(+) = (S)-2-ethyl-2-hydroxy-3-oxobutanoate + NADPH + H(+). The protein operates within amino-acid biosynthesis; L-isoleucine biosynthesis; L-isoleucine from 2-oxobutanoate: step 2/4. It functions in the pathway amino-acid biosynthesis; L-valine biosynthesis; L-valine from pyruvate: step 2/4. In terms of biological role, involved in the biosynthesis of branched-chain amino acids (BCAA). Catalyzes an alkyl-migration followed by a ketol-acid reduction of (S)-2-acetolactate (S2AL) to yield (R)-2,3-dihydroxy-isovalerate. In the isomerase reaction, S2AL is rearranged via a Mg-dependent methyl migration to produce 3-hydroxy-3-methyl-2-ketobutyrate (HMKB). In the reductase reaction, this 2-ketoacid undergoes a metal-dependent reduction by NADPH to yield (R)-2,3-dihydroxy-isovalerate. The polypeptide is Ketol-acid reductoisomerase (NADP(+)) (Synechococcus sp. (strain RCC307)).